The chain runs to 403 residues: Leu/Ile/Val-binding protein homolog 8 (403 aa).

The signal sequence occupies residues 1–26 (MRLSRLLIGASLGVALSSTVFTAALA).

The protein belongs to the leucine-binding protein family.

In terms of biological role, component of an amino-acid transport system. This chain is Leu/Ile/Val-binding protein homolog 8, found in Brucella abortus (strain 2308).